Reading from the N-terminus, the 78-residue chain is uncharacterized protein (78 aa).

The next 2 helical transmembrane spans lie at 20–40 and 57–77; these read SVYF…WLVV and LLMD…ILIA.

It localises to the cell membrane. This is an uncharacterized protein from Escherichia coli (strain K12).